Consider the following 161-residue polypeptide: Dihydrofolate reductase type 1 from Tn4003 (161 aa).

A DHFR domain is found at 2-157 (TLSIIVAHDK…IPHTFLHLVR (156 aa)). Substrate is bound at residue 6–8 (IVA). NADP(+) is bound by residues 7–8 (VA) and 15–20 (IGYQNQ). Asp-28 is a substrate binding site. 44–47 (ARKT) contacts NADP(+). Position 58 (Arg-58) interacts with substrate. NADP(+) is bound by residues 63–66 (LTNQ) and 93–98 (FGGQTL). A substrate-binding site is contributed by Thr-112.

Belongs to the dihydrofolate reductase family.

It catalyses the reaction (6S)-5,6,7,8-tetrahydrofolate + NADP(+) = 7,8-dihydrofolate + NADPH + H(+). It participates in cofactor biosynthesis; tetrahydrofolate biosynthesis; 5,6,7,8-tetrahydrofolate from 7,8-dihydrofolate: step 1/1. Its function is as follows. Key enzyme in folate metabolism. Catalyzes an essential reaction for de novo glycine and purine synthesis, and for DNA precursor synthesis. The polypeptide is Dihydrofolate reductase type 1 from Tn4003 (dfrA) (Staphylococcus aureus).